We begin with the raw amino-acid sequence, 297 residues long: Golgi-associated RAB2 interactor protein 1A (297 aa).

The tract at residues 226-257 is disordered; the sequence is SNRHQTSRDRHTDTATETDNSGNCKSTPLVAS. Polar residues predominate over residues 240–257; that stretch reads ATETDNSGNCKSTPLVAS.

Belongs to the GARIN family. As to quaternary structure, interacts (via N-terminus) with RAB2B (in GTP-bound form). As to expression, expressed in testis (at protein level).

The protein localises to the golgi apparatus. Its function is as follows. RAB2B effector protein required for accurate acrosome formation and normal male fertility. The polypeptide is Golgi-associated RAB2 interactor protein 1A (Mus musculus (Mouse)).